A 133-amino-acid polypeptide reads, in one-letter code: NADPH-dependent 7-cyano-7-deazaguanine reductase (133 aa).

Cys49 acts as the Thioimide intermediate in catalysis. The Proton donor role is filled by Asp56. Residues 71–73 (IEL) and 90–91 (HE) each bind substrate.

Belongs to the GTP cyclohydrolase I family. QueF type 1 subfamily.

It localises to the cytoplasm. It catalyses the reaction 7-aminomethyl-7-carbaguanine + 2 NADP(+) = 7-cyano-7-deazaguanine + 2 NADPH + 3 H(+). Its pathway is tRNA modification; tRNA-queuosine biosynthesis. In terms of biological role, catalyzes the NADPH-dependent reduction of 7-cyano-7-deazaguanine (preQ0) to 7-aminomethyl-7-deazaguanine (preQ1). In Leptospira borgpetersenii serovar Hardjo-bovis (strain JB197), this protein is NADPH-dependent 7-cyano-7-deazaguanine reductase.